The primary structure comprises 434 residues: Chaperone SurA (434 aa).

The signal sequence occupies residues 1 to 22; the sequence is MKKWKSSLLGIAIWSLAASSMA. PpiC domains lie at 173–274 and 283–383; these read TVQF…KVND and VTEV…EVLD.

It localises to the periplasm. The catalysed reaction is [protein]-peptidylproline (omega=180) = [protein]-peptidylproline (omega=0). In terms of biological role, chaperone involved in the correct folding and assembly of outer membrane proteins. Recognizes specific patterns of aromatic residues and the orientation of their side chains, which are found more frequently in integral outer membrane proteins. May act in both early periplasmic and late outer membrane-associated steps of protein maturation. The chain is Chaperone SurA from Photobacterium profundum (strain SS9).